Reading from the N-terminus, the 1070-residue chain is Inactive tyrosine-protein kinase 7 (1070 aa).

Positions Met1–Thr30 are cleaved as a signal peptide. 7 Ig-like C2-type domains span residues Ala31–Asn120, Pro128–Ser218, Ala225–Leu317, Pro309–Thr407, Pro412–Gln497, Lys503–Leu586, and Gly578–Tyr680. Topologically, residues Ala31 to Thr704 are extracellular. A disulfide bridge links Cys53 with Cys101. N-linked (GlcNAc...) asparagine glycosylation is found at Asn116, Asn175, Asn184, Asn214, Asn268, and Asn283. A disulfide bridge connects residues Cys150 and Cys200. 2 disulfides stabilise this stretch: Cys246-Cys301 and Cys343-Cys391. 4 N-linked (GlcNAc...) asparagine glycosylation sites follow: Asn405, Asn463, Asn567, and Asn646. 3 disulfide bridges follow: Cys433/Cys481, Cys524/Cys570, and Cys613/Cys664. The helical transmembrane segment at Ile705 to Tyr725 threads the bilayer. The Cytoplasmic segment spans residues Cys726–Pro1070. Disordered stretches follow at residues Gln736–Pro759 and Gly773–Arg793. An interaction with CTNNB1 region spans residues Ser794 to Pro1070. One can recognise a Protein kinase; inactive domain in the interval Leu796–Val1066. A Phosphoserine modification is found at Ser1064.

This sequence belongs to the protein kinase superfamily. Tyr protein kinase family. Insulin receptor subfamily. In terms of assembly, interacts with CTNNB1. In terms of processing, MMP14 cleaves PTK7 between Pro-621 and Leu-622 generating an N-terminal soluble (70 kDa) fragment and a membrane C-terminal (50 kDa) fragment. Proteolysis by MMP14 regulates PTK7 function in non-canonical Wnt signaling pathway. As to expression, highly expressed in lung, liver, pancreas, kidney, placenta and melanocytes. Weakly expressed in thyroid gland, ovary, brain, heart and skeletal muscle. Also expressed in erythroleukemia cells. But not expressed in colon.

It localises to the membrane. Its subcellular location is the cell junction. Inactive tyrosine kinase involved in Wnt signaling pathway. Component of both the non-canonical (also known as the Wnt/planar cell polarity signaling) and the canonical Wnt signaling pathway. Functions in cell adhesion, cell migration, cell polarity, proliferation, actin cytoskeleton reorganization and apoptosis. Has a role in embryogenesis, epithelial tissue organization and angiogenesis. This is Inactive tyrosine-protein kinase 7 (PTK7) from Homo sapiens (Human).